Reading from the N-terminus, the 80-residue chain is Raniseptin-8 (80 aa).

Residues 1-22 (MAFLKKSLFLVLFLGIVSLSIC) form the signal peptide. A propeptide spanning residues 23–49 (EEEKREGEEEEKQEEENEELSEEELRE) is cleaved from the precursor. Residues 27–46 (REGEEEEKQEEENEELSEEE) form a disordered region. Positions 30-44 (EEEEKQEEENEELSE) are enriched in acidic residues.

The protein belongs to the frog skin active peptide (FSAP) family. Dermaseptin subfamily. Expressed by the skin glands.

It localises to the secreted. Functionally, has antibacterial activity. The sequence is that of Raniseptin-8 from Boana raniceps (Chaco tree frog).